A 108-amino-acid polypeptide reads, in one-letter code: Vacuolar ATPase assembly integral membrane protein VMA21 (108 aa).

The Cytoplasmic portion of the chain corresponds to 1-34 (MASRRSAAAKKEDFSFEAAATQSAHEAQEGFPSS). A helical transmembrane segment spans residues 35–55 (VIIKLVLVTVAMICAPLGTYF). Residues 56–68 (GTLNTICGGDSSY) lie on the Lumenal side of the membrane. The chain crosses the membrane as a helical span at residues 69 to 89 (AGALAAISVNVVLIIYLIIAA). At 90 to 108 (REDTGESEEERKGKEGKEE) the chain is on the cytoplasmic side.

The protein belongs to the VMA21 family.

The protein localises to the endoplasmic reticulum membrane. It localises to the endoplasmic reticulum-Golgi intermediate compartment membrane. Its subcellular location is the cytoplasmic vesicle. It is found in the COPII-coated vesicle membrane. In terms of biological role, required for the assembly of the V0 complex of the vacuolar ATPase (V-ATPase) in the endoplasmic reticulum. The sequence is that of Vacuolar ATPase assembly integral membrane protein VMA21 from Ajellomyces capsulatus (strain NAm1 / WU24) (Darling's disease fungus).